The sequence spans 508 residues: Acyl-CoA-binding domain-containing protein 5 (508 aa).

The ACB domain maps to 44–133 (YETRFEAAVK…MKKIIETMPM (90 aa)). An acyl-CoA-binding positions include 55–64 (IQSLPKNGSF), 75–79 (YSFYK), lysine 101, and tyrosine 120. The segment at 175-215 (AKAVNGKAESSDSGAESEEEEAQEELKGAEQSGSDDKKTLK) is disordered. The stretch at 181–214 (KAESSDSGAESEEEEAQEELKGAEQSGSDDKKTL) forms a coiled coil. Serine 184, serine 185, serine 187, serine 191, serine 206, and serine 233 each carry phosphoserine. Residues 198-215 (EELKGAEQSGSDDKKTLK) are compositionally biased toward basic and acidic residues. A compositionally biased stretch (basic and acidic residues) spans 240-260 (SDIHTDSSRSTRSSEDEKPGD). A disordered region spans residues 240–300 (SDIHTDSSRS…LTSDSDSEVY (61 aa)). Serine 303 is subject to Phosphoserine. Disordered stretches follow at residues 318–340 (PTQH…NGSI) and 353–419 (EVKH…RGSR). The span at 353–376 (EVKHGGEDGRSSSGAPHRETRGGE) shows a compositional bias: basic and acidic residues. Serine 405 carries the post-translational modification Phosphoserine. Residues 408–418 (DGERWGSDRGS) show a composition bias toward basic and acidic residues. Positions 428–453 (LVLIRLQEDMQNVLQRLHKLETLTAS) form a coiled coil. Lysine 446 bears the N6-acetyllysine mark. A helical transmembrane segment spans residues 480–500 (GALAFAIIWPFIAQWLAHLYY).

The protein belongs to the ATG37 family.

It localises to the peroxisome membrane. Functionally, acyl-CoA binding protein which acts as the peroxisome receptor for pexophagy but is dispensable for aggrephagy and nonselective autophagy. Binds medium- and long-chain acyl-CoA esters. In Mus musculus (Mouse), this protein is Acyl-CoA-binding domain-containing protein 5 (Acbd5).